A 334-amino-acid polypeptide reads, in one-letter code: Fructose-1,6-bisphosphatase class 1 (334 aa).

Mg(2+) is bound by residues E90, D113, L115, and D116. Substrate contacts are provided by residues D116–S119, N209, Y242, and K272. E278 lines the Mg(2+) pocket.

This sequence belongs to the FBPase class 1 family. Homotetramer. Mg(2+) is required as a cofactor.

It localises to the cytoplasm. It catalyses the reaction beta-D-fructose 1,6-bisphosphate + H2O = beta-D-fructose 6-phosphate + phosphate. It functions in the pathway carbohydrate biosynthesis; gluconeogenesis. The chain is Fructose-1,6-bisphosphatase class 1 from Haemophilus ducreyi (strain 35000HP / ATCC 700724).